The sequence spans 296 residues: Putative F-box protein At1g67623 (296 aa).

Residues 21 to 70 enclose the F-box domain; the sequence is SLCLDSLPEDLLVEISSCTGASSLSAVRNLRLVSKSFRRICDEKYVFYRL.

The polypeptide is Putative F-box protein At1g67623 (Arabidopsis thaliana (Mouse-ear cress)).